The primary structure comprises 428 residues: Serine--tRNA ligase (428 aa).

235–237 (TAE) is a binding site for L-serine. 266–268 (RSE) contributes to the ATP binding site. Position 289 (E289) interacts with L-serine. 353 to 356 (EISS) contributes to the ATP binding site. Residue S389 coordinates L-serine.

Belongs to the class-II aminoacyl-tRNA synthetase family. Type-1 seryl-tRNA synthetase subfamily. As to quaternary structure, homodimer. The tRNA molecule binds across the dimer.

The protein localises to the cytoplasm. The enzyme catalyses tRNA(Ser) + L-serine + ATP = L-seryl-tRNA(Ser) + AMP + diphosphate + H(+). It catalyses the reaction tRNA(Sec) + L-serine + ATP = L-seryl-tRNA(Sec) + AMP + diphosphate + H(+). It participates in aminoacyl-tRNA biosynthesis; selenocysteinyl-tRNA(Sec) biosynthesis; L-seryl-tRNA(Sec) from L-serine and tRNA(Sec): step 1/1. Functionally, catalyzes the attachment of serine to tRNA(Ser). Is also able to aminoacylate tRNA(Sec) with serine, to form the misacylated tRNA L-seryl-tRNA(Sec), which will be further converted into selenocysteinyl-tRNA(Sec). In Pasteurella multocida (strain Pm70), this protein is Serine--tRNA ligase.